We begin with the raw amino-acid sequence, 137 residues long: Histone H2B (137 aa).

Residues 1–10 (MPPKAADKKP) show a composition bias toward basic and acidic residues. Residues 1–45 (MPPKAADKKPANKAPATASKAPEKKDAGKKTAASGEKKKRTKARK) are disordered. Residues Lys-8 and Lys-9 each carry the N6-acetyllysine; alternate modification. Residues Lys-8 and Lys-9 each participate in a glycyl lysine isopeptide (Lys-Gly) (interchain with G-Cter in SUMO); alternate cross-link. Residue Lys-13 is modified to N6-acetyllysine. N6-acetyllysine; alternate is present on Lys-24. Residue Lys-24 forms a Glycyl lysine isopeptide (Lys-Gly) (interchain with G-Cter in SUMO); alternate linkage. Lys-25 participates in a covalent cross-link: Glycyl lysine isopeptide (Lys-Gly) (interchain with G-Cter in SUMO). A Glycyl lysine isopeptide (Lys-Gly) (interchain with G-Cter in ubiquitin) cross-link involves residue Lys-131.

Belongs to the histone H2B family. The nucleosome is a histone octamer containing two molecules each of H2A, H2B, H3 and H4 assembled in one H3-H4 heterotetramer and two H2A-H2B heterodimers. The octamer wraps approximately 147 bp of DNA. Monoubiquitinated to form H2BK123ub1. H2BK123ub1 gives a specific tag for epigenetic transcriptional activation and is also prerequisite for H3K4me and H3K79me formation. H2BK123ub1 also modulates the formation of double-strand breaks during meiosis and is a prerequisite for DNA-damage checkpoint activation. In terms of processing, acetylated by GCN5 to form H2BK11ac and H2BK16ac. H2BK16ac can also be formed by ESA1. Acetylation of N-terminal lysines and particularly formation of H2BK11acK16ac has a positive effect on transcription. Post-translationally, sumoylation to form H2BK6su or H2BK7su, and probably also H2BK16su or H2BK17su, occurs preferentially near the telomeres and represses gene transcription.

It is found in the nucleus. The protein localises to the chromosome. In terms of biological role, core component of nucleosome. Nucleosomes wrap and compact DNA into chromatin, limiting DNA accessibility to the cellular machineries which require DNA as a template. Histones thereby play a central role in transcription regulation, DNA repair, DNA replication and chromosomal stability. DNA accessibility is regulated via a complex set of post-translational modifications of histones, also called histone code, and nucleosome remodeling. The sequence is that of Histone H2B (HTB1) from Podospora anserina (Pleurage anserina).